The chain runs to 273 residues: 4-hydroxy-tetrahydrodipicolinate reductase (273 aa).

NAD(+) is bound by residues 8–13 (GAAGRM), E34, 102–104 (GTT), and 128–131 (SSNM). The active-site Proton donor/acceptor is H160. A (S)-2,3,4,5-tetrahydrodipicolinate-binding site is contributed by H161. K164 acts as the Proton donor in catalysis. (S)-2,3,4,5-tetrahydrodipicolinate is bound at residue 170–171 (GT).

The protein belongs to the DapB family.

The protein resides in the cytoplasm. The catalysed reaction is (S)-2,3,4,5-tetrahydrodipicolinate + NAD(+) + H2O = (2S,4S)-4-hydroxy-2,3,4,5-tetrahydrodipicolinate + NADH + H(+). The enzyme catalyses (S)-2,3,4,5-tetrahydrodipicolinate + NADP(+) + H2O = (2S,4S)-4-hydroxy-2,3,4,5-tetrahydrodipicolinate + NADPH + H(+). Its pathway is amino-acid biosynthesis; L-lysine biosynthesis via DAP pathway; (S)-tetrahydrodipicolinate from L-aspartate: step 4/4. Its function is as follows. Catalyzes the conversion of 4-hydroxy-tetrahydrodipicolinate (HTPA) to tetrahydrodipicolinate. The chain is 4-hydroxy-tetrahydrodipicolinate reductase from Methanobrevibacter smithii (strain ATCC 35061 / DSM 861 / OCM 144 / PS).